An 841-amino-acid chain; its full sequence is Protein NLP6 (841 aa).

Residues Glu-539–Ser-624 enclose the RWP-RK domain. The disordered stretch occupies residues Asn-649–Ala-682. The segment covering Pro-651–Gln-662 has biased composition (polar residues). The 83-residue stretch at Leu-741–Val-823 folds into the PB1 domain.

It is found in the nucleus. In terms of biological role, probable transcription factor. This Arabidopsis thaliana (Mouse-ear cress) protein is Protein NLP6 (NLP6).